Here is a 123-residue protein sequence, read N- to C-terminus: UPF0102 protein Csal_2201 (123 aa).

The protein belongs to the UPF0102 family.

This Chromohalobacter salexigens (strain ATCC BAA-138 / DSM 3043 / CIP 106854 / NCIMB 13768 / 1H11) protein is UPF0102 protein Csal_2201.